The sequence spans 163 residues: 2-C-methyl-D-erythritol 2,4-cyclodiphosphate synthase (163 aa).

A divalent metal cation-binding residues include aspartate 12 and histidine 14. 4-CDP-2-C-methyl-D-erythritol 2-phosphate is bound by residues aspartate 12 to histidine 14 and histidine 38 to serine 39. Residue histidine 46 coordinates a divalent metal cation. 4-CDP-2-C-methyl-D-erythritol 2-phosphate is bound by residues aspartate 60–glycine 62, phenylalanine 65–aspartate 69, threonine 136–glutamate 139, phenylalanine 143, and arginine 146.

This sequence belongs to the IspF family. As to quaternary structure, homotrimer. A divalent metal cation is required as a cofactor.

The catalysed reaction is 4-CDP-2-C-methyl-D-erythritol 2-phosphate = 2-C-methyl-D-erythritol 2,4-cyclic diphosphate + CMP. It participates in isoprenoid biosynthesis; isopentenyl diphosphate biosynthesis via DXP pathway; isopentenyl diphosphate from 1-deoxy-D-xylulose 5-phosphate: step 4/6. Functionally, involved in the biosynthesis of isopentenyl diphosphate (IPP) and dimethylallyl diphosphate (DMAPP), two major building blocks of isoprenoid compounds. Catalyzes the conversion of 4-diphosphocytidyl-2-C-methyl-D-erythritol 2-phosphate (CDP-ME2P) to 2-C-methyl-D-erythritol 2,4-cyclodiphosphate (ME-CPP) with a corresponding release of cytidine 5-monophosphate (CMP). This is 2-C-methyl-D-erythritol 2,4-cyclodiphosphate synthase from Acinetobacter baylyi (strain ATCC 33305 / BD413 / ADP1).